The following is a 413-amino-acid chain: Alpha-1-antitrypsin 1-2 (413 aa).

The first 24 residues, 1-24 (MTPSISWGLLLLAGLCCMVPSFLA), serve as a signal peptide directing secretion. N-linked (GlcNAc...) asparagine glycans are attached at residues N64, N101, and N265. Positions 368 to 387 (AATVFEAVPMSMPPILRFDH) are RCL.

This sequence belongs to the serpin family.

It localises to the secreted. Its function is as follows. Inhibitor of serine proteases. Its primary target is elastase, but it also has a moderate affinity for plasmin and thrombin. The polypeptide is Alpha-1-antitrypsin 1-2 (Serpina1b) (Mus musculus (Mouse)).